The following is a 273-amino-acid chain: Shikimate dehydrogenase (NADP(+)) (273 aa).

Residues 15 to 17 (SLS) and T62 each bind shikimate. K66 serves as the catalytic Proton acceptor. An NADP(+)-binding site is contributed by E78. Residues N87 and D102 each contribute to the shikimate site. Residues 126-130 (GAGGA), 149-154 (NRTPER), I215, and G238 each bind NADP(+).

It belongs to the shikimate dehydrogenase family. As to quaternary structure, homodimer.

It catalyses the reaction shikimate + NADP(+) = 3-dehydroshikimate + NADPH + H(+). It functions in the pathway metabolic intermediate biosynthesis; chorismate biosynthesis; chorismate from D-erythrose 4-phosphate and phosphoenolpyruvate: step 4/7. Its function is as follows. Involved in the biosynthesis of the chorismate, which leads to the biosynthesis of aromatic amino acids. Catalyzes the reversible NADPH linked reduction of 3-dehydroshikimate (DHSA) to yield shikimate (SA). The protein is Shikimate dehydrogenase (NADP(+)) of Desulfitobacterium hafniense (strain Y51).